A 256-amino-acid chain; its full sequence is tRNA pseudouridine synthase A (256 aa).

D49 serves as the catalytic Nucleophile. Y104 lines the substrate pocket.

Belongs to the tRNA pseudouridine synthase TruA family.

It catalyses the reaction uridine(38/39/40) in tRNA = pseudouridine(38/39/40) in tRNA. Functionally, formation of pseudouridine at positions 38, 39 and 40 in the anticodon stem and loop of transfer RNAs. This is tRNA pseudouridine synthase A from Methanopyrus kandleri (strain AV19 / DSM 6324 / JCM 9639 / NBRC 100938).